The primary structure comprises 1212 residues: Nucleolar protein 6 (1212 aa).

Disordered regions lie at residues 1 to 72 and 1156 to 1212; these read MGKI…PVSI and KREQ…KSLS. Basic residues predominate over residues 1197 to 1212; it reads LKRKSLIKSRPLKSLS.

The protein belongs to the NRAP family. In terms of assembly, part of the small subunit (SSU) processome, composed of more than 70 proteins and the RNA chaperone small nucleolar RNA (snoRNA) U3.

Its subcellular location is the nucleus. It is found in the nucleolus. It localises to the chromosome. Functionally, part of the small subunit (SSU) processome, first precursor of the small eukaryotic ribosomal subunit. During the assembly of the SSU processome in the nucleolus, many ribosome biogenesis factors, an RNA chaperone and ribosomal proteins associate with the nascent pre-rRNA and work in concert to generate RNA folding, modifications, rearrangements and cleavage as well as targeted degradation of pre-ribosomal RNA by the RNA exosome. This Drosophila pseudoobscura pseudoobscura (Fruit fly) protein is Nucleolar protein 6.